The chain runs to 314 residues: Probable cell division protein WhiA (314 aa).

Residues 274–308 (SLKELGEMVSTGPISKSGVNHRLRKLNDLADKIRN) constitute a DNA-binding region (H-T-H motif).

It belongs to the WhiA family.

Functionally, involved in cell division and chromosome segregation. This Staphylococcus aureus (strain Mu3 / ATCC 700698) protein is Probable cell division protein WhiA.